A 255-amino-acid polypeptide reads, in one-letter code: Small ribosomal subunit protein eS1 (255 aa).

Alanine 2 is modified (N-acetylalanine; partial).

The protein belongs to the eukaryotic ribosomal protein eS1 family. In terms of assembly, component of the small ribosomal subunit. Mature ribosomes consist of a small (40S) and a large (60S) subunit. The 40S subunit contains about 33 different proteins and 1 molecule of RNA (18S). The 60S subunit contains about 49 different proteins and 3 molecules of RNA (25S, 5.8S and 5S).

It is found in the cytoplasm. In Vanderwaltozyma polyspora (strain ATCC 22028 / DSM 70294 / BCRC 21397 / CBS 2163 / NBRC 10782 / NRRL Y-8283 / UCD 57-17) (Kluyveromyces polysporus), this protein is Small ribosomal subunit protein eS1.